A 217-amino-acid polypeptide reads, in one-letter code: Polyadenylate-binding protein 3 (217 aa).

The disordered stretch occupies residues 1–28 (MEEEEHEVYGGEIPEVGDTDVPDPDIDM). Acidic residues predominate over residues 15 to 28 (EVGDTDVPDPDIDM). Residues 30–71 (AADEDAVTELAEMKRRLKEMEEEAAALREMQAKVEKEMGATQ) are a coiled coil. A necessary for homooligomerization region spans residues 75–216 (SMAANQEGKE…FRRPMRYMPY (142 aa)). Residues 89 to 165 (RSVYVGNVDY…RQLKVSPKRT (77 aa)) form the RRM domain. A Nuclear localization signal motif is present at residues 162–169 (PKRTNVPG).

Monomer and homooligomer. Binds RNA as a monomer and oligomerizes when bound to poly(A). Forms a complex with cleavage and polyadenylation specificity factor (CPSF) subunits PAPS4, PABN1, PABN2, CSTF50 and FIPS5. Interacts with CSP3.

It is found in the nucleus speckle. It localises to the cytoplasm. Its function is as follows. Involved in the 3'-end formation of mRNA precursors (pre-mRNA) by the addition of a poly(A) tail of 200-250 nt to the upstream cleavage product. Stimulates poly(A) polymerase (PAPOLA) conferring processivity on the poly(A) tail elongation reaction and also controls the poly(A) tail length. Increases the affinity of poly(A) polymerase for RNA. Binds to poly(A) and to poly(G) with high affinity. May protect the poly(A) tail from degradation. This Arabidopsis thaliana (Mouse-ear cress) protein is Polyadenylate-binding protein 3.